We begin with the raw amino-acid sequence, 2511 residues long: Fatty acid synthase (2511 aa).

Position 1 is an N-acetylmethionine (Met1). One can recognise a Ketosynthase family 3 (KS3) domain in the interval 1-406 (MEEVVIAGMS…GSNVHIILRP (406 aa)). Ser63 carries the phosphoserine modification. Lys70 carries the N6-acetyllysine modification. Cys161 serves as the catalytic For beta-ketoacyl synthase activity. The residue at position 207 (Ser207) is a Phosphoserine. Catalysis depends on His293, which acts as the For beta-ketoacyl synthase activity. Lys298 carries the post-translational modification N6-acetyllysine. His331 serves as the catalytic For beta-ketoacyl synthase activity. The segment at 429 to 817 (RTPEAVQKLL…IDANPNALFP (389 aa)) is acyl and malonyl transferases. Residues Lys436 and Lys528 each carry the N6-acetyllysine modification. Residue Ser581 is the For malonyltransferase activity of the active site. An acyl-CoA contacts are provided by residues 647-648 (DT) and Phe671. Lys673 is subject to N6-acetyllysine. Ser725 carries the post-translational modification Phosphoserine. Arg773 lines the an acyl-CoA pocket. The interval 838–966 (HSLAWDVPAA…KVYQWDDPDP (129 aa)) is N-terminal hotdog fold. Positions 838–1108 (HSLAWDVPAA…TESAPRRQQE (271 aa)) constitute a PKS/mFAS DH domain. His878 functions as the Proton acceptor; for dehydratase activity in the catalytic mechanism. The tract at residues 981–1108 (EPLFLAQAEV…TESAPRRQQE (128 aa)) is C-terminal hotdog fold. Lys992 carries the post-translational modification N6-acetyllysine. The active-site Proton donor; for dehydratase activity is the Asp1031. Ser1174 and Ser1411 each carry phosphoserine. Cys1471 is subject to S-nitrosocysteine. 2 positions are modified to phosphoserine: Ser1584 and Ser1594. The segment at 1635–1863 (DVPSNWTLEE…VQVLAEEPEA (229 aa)) is enoyl reductase. Residue 1671 to 1688 (LLIHSGSGGVGQAAIAIA) participates in NADP(+) binding. An N6-(pyridoxal phosphate)lysine; alternate modification is found at Lys1704. N6-acetyllysine; alternate is present on Lys1704. Lys1771 and Lys1847 each carry N6-acetyllysine. Residues 1864-2118 (VLKGAKPKLM…FVLAEKAAAY (255 aa)) are beta-ketoacyl reductase. Residue 1886 to 1901 (SYIIAGGLGGFGLELA) coordinates NADP(+). Lys1995 carries the N6-acetyllysine modification. Cys2091 carries the S-nitrosocysteine modification. One can recognise a Carrier domain in the interval 2121–2198 (RDSQRDLVEA…ELSSKADEAS (78 aa)). Residue Ser2156 is modified to O-(pantetheine 4'-phosphoryl)serine; alternate. Phosphoserine; alternate is present on Ser2156. At Ser2198 the chain carries Phosphoserine. A phosphothreonine mark is found at Thr2204 and Thr2215. Residues 2207–2511 (EDGLAQQQTQ…AEPRVSVREG (305 aa)) form a thioesterase region. Ser2236 is modified (phosphoserine). The active-site For thioesterase activity is Ser2308. The residue at position 2391 (Lys2391) is an N6-acetyllysine. Residue Lys2449 forms a Glycyl lysine isopeptide (Lys-Gly) (interchain with G-Cter in SUMO2) linkage. The active-site For thioesterase activity is His2481.

Homodimer which is arranged in a head to tail fashion. Interacts with CEACAM1; this interaction is insulin and phosphorylation-dependent; reduces fatty-acid synthase activity. Post-translationally, S-nitrosylation of Fatty acid synthase at cysteine residues Cys-1471 or Cys-2091 is important for the enzyme dimerization. In adipocytes, S-nitrosylation of Fatty acid synthase occurs under physiological conditions and gradually increases during adipogenesis. In terms of tissue distribution, ubiquitous. Prominent expression in brain, lung, liver and mammary gland.

The protein resides in the cytoplasm. Its subcellular location is the melanosome. The enzyme catalyses acetyl-CoA + n malonyl-CoA + 2n NADPH + 2n H(+) = a long-chain fatty acid + (n+1) CoA + n CO2 + 2n NADP(+).. It carries out the reaction holo-[ACP] + acetyl-CoA = acetyl-[ACP] + CoA. The catalysed reaction is holo-[ACP] + malonyl-CoA = malonyl-[ACP] + CoA. It catalyses the reaction a fatty acyl-[ACP] + malonyl-[ACP] + H(+) = a 3-oxoacyl-[ACP] + holo-[ACP] + CO2. The enzyme catalyses a (3R)-hydroxyacyl-[ACP] + NADP(+) = a 3-oxoacyl-[ACP] + NADPH + H(+). It carries out the reaction a (3R)-hydroxyacyl-[ACP] = a (2E)-enoyl-[ACP] + H2O. The catalysed reaction is a 2,3-saturated acyl-[ACP] + NADP(+) = a (2E)-enoyl-[ACP] + NADPH + H(+). It catalyses the reaction hexadecanoyl-[ACP] + H2O = hexadecanoate + holo-[ACP] + H(+). The enzyme catalyses acetyl-[ACP] + malonyl-[ACP] + H(+) = 3-oxobutanoyl-[ACP] + holo-[ACP] + CO2. It carries out the reaction 3-oxobutanoyl-[ACP] + NADPH + H(+) = (3R)-hydroxybutanoyl-[ACP] + NADP(+). The catalysed reaction is (3R)-hydroxybutanoyl-[ACP] = (2E)-butenoyl-[ACP] + H2O. It catalyses the reaction (2E)-butenoyl-[ACP] + NADPH + H(+) = butanoyl-[ACP] + NADP(+). The enzyme catalyses butanoyl-[ACP] + malonyl-[ACP] + H(+) = 3-oxohexanoyl-[ACP] + holo-[ACP] + CO2. It carries out the reaction 3-oxohexanoyl-[ACP] + NADPH + H(+) = (3R)-hydroxyhexanoyl-[ACP] + NADP(+). The catalysed reaction is (3R)-hydroxyhexanoyl-[ACP] = (2E)-hexenoyl-[ACP] + H2O. It catalyses the reaction (2E)-hexenoyl-[ACP] + NADPH + H(+) = hexanoyl-[ACP] + NADP(+). The enzyme catalyses hexanoyl-[ACP] + malonyl-[ACP] + H(+) = 3-oxooctanoyl-[ACP] + holo-[ACP] + CO2. It carries out the reaction 3-oxooctanoyl-[ACP] + NADPH + H(+) = (3R)-hydroxyoctanoyl-[ACP] + NADP(+). The catalysed reaction is (3R)-hydroxyoctanoyl-[ACP] = (2E)-octenoyl-[ACP] + H2O. It catalyses the reaction (2E)-octenoyl-[ACP] + NADPH + H(+) = octanoyl-[ACP] + NADP(+). The enzyme catalyses octanoyl-[ACP] + malonyl-[ACP] + H(+) = 3-oxodecanoyl-[ACP] + holo-[ACP] + CO2. It carries out the reaction 3-oxodecanoyl-[ACP] + NADPH + H(+) = (3R)-hydroxydecanoyl-[ACP] + NADP(+). The catalysed reaction is (3R)-hydroxydecanoyl-[ACP] = (2E)-decenoyl-[ACP] + H2O. It catalyses the reaction (2E)-decenoyl-[ACP] + NADPH + H(+) = decanoyl-[ACP] + NADP(+). The enzyme catalyses decanoyl-[ACP] + malonyl-[ACP] + H(+) = 3-oxododecanoyl-[ACP] + holo-[ACP] + CO2. It carries out the reaction 3-oxododecanoyl-[ACP] + NADPH + H(+) = (3R)-hydroxydodecanoyl-[ACP] + NADP(+). The catalysed reaction is (3R)-hydroxydodecanoyl-[ACP] = (2E)-dodecenoyl-[ACP] + H2O. It catalyses the reaction (2E)-dodecenoyl-[ACP] + NADPH + H(+) = dodecanoyl-[ACP] + NADP(+). The enzyme catalyses dodecanoyl-[ACP] + malonyl-[ACP] + H(+) = 3-oxotetradecanoyl-[ACP] + holo-[ACP] + CO2. It carries out the reaction 3-oxotetradecanoyl-[ACP] + NADPH + H(+) = (3R)-hydroxytetradecanoyl-[ACP] + NADP(+). The catalysed reaction is (3R)-hydroxytetradecanoyl-[ACP] = (2E)-tetradecenoyl-[ACP] + H2O. It catalyses the reaction (2E)-tetradecenoyl-[ACP] + NADPH + H(+) = tetradecanoyl-[ACP] + NADP(+). The enzyme catalyses tetradecanoyl-[ACP] + malonyl-[ACP] + H(+) = 3-oxohexadecanoyl-[ACP] + holo-[ACP] + CO2. It carries out the reaction 3-oxohexadecanoyl-[ACP] + NADPH + H(+) = (3R)-hydroxyhexadecanoyl-[ACP] + NADP(+). The catalysed reaction is (3R)-hydroxyhexadecanoyl-[ACP] = (2E)-hexadecenoyl-[ACP] + H2O. It catalyses the reaction (2E)-hexadecenoyl-[ACP] + NADPH + H(+) = hexadecanoyl-[ACP] + NADP(+). The enzyme catalyses hexadecanoyl-[ACP] + malonyl-[ACP] + H(+) = 3-oxooctadecanoyl-[ACP] + holo-[ACP] + CO2. It carries out the reaction 3-oxooctadecanoyl-[ACP] + NADPH + H(+) = (3R)-hydroxyoctadecanoyl-[ACP] + NADP(+). The catalysed reaction is (3R)-hydroxyoctadecanoyl-[ACP] = (2E)-octadecenoyl-[ACP] + H2O. It catalyses the reaction (2E)-octadecenoyl-[ACP] + NADPH + H(+) = octadecanoyl-[ACP] + NADP(+). The enzyme catalyses tetradecanoyl-[ACP] + H2O = tetradecanoate + holo-[ACP] + H(+). It carries out the reaction octadecanoyl-[ACP] + H2O = octadecanoate + holo-[ACP] + H(+). Its pathway is lipid metabolism; fatty acid biosynthesis. With respect to regulation, activated by S-nitrosylation which promotes enzyme dimerization. Cerulenin, a potent non-competitive pharmacological inhibitor of FAS, binds covalently to the active site of the condensing enzyme region, inactivating a key enzyme step in fatty acid synthesis. In terms of biological role, fatty acid synthetase is a multifunctional enzyme that catalyzes the de novo biosynthesis of long-chain saturated fatty acids starting from acetyl-CoA and malonyl-CoA in the presence of NADPH. This multifunctional protein contains 7 catalytic activities and a site for the binding of the prosthetic group 4'-phosphopantetheine of the acyl carrier protein ([ACP]) domain. Its function is as follows. (Microbial infection) Fatty acid synthetase activity is required for SARS coronavirus-2/SARS-CoV-2 replication. The sequence is that of Fatty acid synthase (FASN) from Homo sapiens (Human).